The sequence spans 226 residues: Triosephosphate isomerase (226 aa).

The active-site Electrophile is histidine 91. Glutamate 163 functions as the Proton acceptor in the catalytic mechanism. Residues glycine 169 and serine 207 each coordinate substrate.

It belongs to the triosephosphate isomerase family. As to quaternary structure, homodimer.

The protein localises to the cytoplasm. It carries out the reaction D-glyceraldehyde 3-phosphate = dihydroxyacetone phosphate. It functions in the pathway carbohydrate biosynthesis; gluconeogenesis. It participates in carbohydrate degradation; glycolysis; D-glyceraldehyde 3-phosphate from glycerone phosphate: step 1/1. Functionally, involved in the gluconeogenesis. Catalyzes stereospecifically the conversion of dihydroxyacetone phosphate (DHAP) to D-glyceraldehyde-3-phosphate (G3P). This is Triosephosphate isomerase from Rhizobium etli (strain ATCC 51251 / DSM 11541 / JCM 21823 / NBRC 15573 / CFN 42).